Consider the following 316-residue polypeptide: Ribosomal protein L11 methyltransferase (316 aa).

Residues Thr-157, Gly-178, Asp-200, and Asn-243 each coordinate S-adenosyl-L-methionine.

Belongs to the methyltransferase superfamily. PrmA family.

It localises to the cytoplasm. The enzyme catalyses L-lysyl-[protein] + 3 S-adenosyl-L-methionine = N(6),N(6),N(6)-trimethyl-L-lysyl-[protein] + 3 S-adenosyl-L-homocysteine + 3 H(+). Functionally, methylates ribosomal protein L11. This is Ribosomal protein L11 methyltransferase from Streptococcus pneumoniae (strain ATCC 700669 / Spain 23F-1).